We begin with the raw amino-acid sequence, 591 residues long: Aspartate--tRNA(Asp/Asn) ligase (591 aa).

Glu174 contributes to the L-aspartate binding site. Residues 198–201 (QLFK) are aspartate. Arg220 contributes to the L-aspartate binding site. ATP is bound by residues 220–222 (RDE) and Gln229. His450 provides a ligand contact to L-aspartate. ATP is bound at residue Glu483. Residue Arg490 participates in L-aspartate binding. 535–538 (GLDR) contacts ATP.

This sequence belongs to the class-II aminoacyl-tRNA synthetase family. Type 1 subfamily. Homodimer.

It is found in the cytoplasm. It carries out the reaction tRNA(Asx) + L-aspartate + ATP = L-aspartyl-tRNA(Asx) + AMP + diphosphate. Its function is as follows. Aspartyl-tRNA synthetase with relaxed tRNA specificity since it is able to aspartylate not only its cognate tRNA(Asp) but also tRNA(Asn). Reaction proceeds in two steps: L-aspartate is first activated by ATP to form Asp-AMP and then transferred to the acceptor end of tRNA(Asp/Asn). This Ectopseudomonas mendocina (strain ymp) (Pseudomonas mendocina) protein is Aspartate--tRNA(Asp/Asn) ligase.